The chain runs to 113 residues: U11-theraphotoxin-Hhn1a (113 aa).

The signal sequence occupies residues 1 to 21; it reads MNTVRVTFLLVFVLAVSLGQA. A propeptide spanning residues 22 to 74 is cleaved from the precursor; sequence DKDENRMEMQEKTEQGKSYLDFAENLLLQKLEELEAKLPEEDSEESRNSRQKR. Basic and acidic residues predominate over residues 58-69; sequence KLPEEDSEESRN. The segment at 58 to 82 is disordered; it reads KLPEEDSEESRNSRQKRCIGEGVPC. Intrachain disulfides connect C75-C90, C82-C95, and C89-C110.

The protein belongs to the neurotoxin 14 (magi-1) family. 01 (HNTX-16) subfamily. In terms of tissue distribution, expressed by the venom gland.

The protein resides in the secreted. Functionally, probable ion channel inhibitor. This Cyriopagopus hainanus (Chinese bird spider) protein is U11-theraphotoxin-Hhn1a.